Consider the following 504-residue polypeptide: Occludin (504 aa).

At 1–57 the chain is on the cytoplasmic side; sequence MFSKKSYDGPPAGYGPPTGYGAPTADYGYGSPPPGSYYVDDAPQLFYKWTSPPGAVR. An MARVEL domain is found at 51-253; that stretch reads SPPGAVRGLQ…ICFFAQKTRS (203 aa). A helical membrane pass occupies residues 58–80; the sequence is GLQAGVLVLCIAIFACVASTLAW. At 81-123 the chain is on the extracellular side; sequence DYGYGLGGAYGTGLGGFYGSNYYGSGLSYSYGYGGYYGGVNQR. The chain crosses the membrane as a helical span at residues 124–148; the sequence is TANGFMIAMAVLCFLAQLGLLVAAL. The Cytoplasmic segment spans residues 149–158; the sequence is SKSGATRSRR. Residues 159–183 traverse the membrane as a helical segment; the sequence is FYLAVLVLSAVLAFVMLIASIVYIM. Topologically, residues 184-227 are extracellular; sequence GVNPQAQMSSGYYYSPLLAMCSQAYGSTYLNQYIYHYCTVDPQE. A disulfide bridge connects residues C204 and C221. Residues 228 to 249 traverse the membrane as a helical segment; sequence AVAAVCGFLIVILLCLICFFAQ. Residues 250-504 are Cytoplasmic-facing; it reads KTRSKIWRYG…MVSAYDKVRG (255 aa). Positions 324–396 are disordered; that stretch reads PSGTYSSRGD…VESSDERDQE (73 aa). The span at 361-370 shows a compositional bias: basic residues; the sequence is PARRGRRRRR. Phosphotyrosine occurs at positions 379 and 383. The segment at 379–385 is interaction with TJP1; it reads YETDYTT. Residues 396 to 504 enclose the OCEL domain; the sequence is EQWASLYPPI…MVSAYDKVRG (109 aa). Residues 412-471 are a coiled coil; the sequence is QRYKQEFDTDLKRYKQLCAEMDSINDRLNQLSRRLDSITEDSPQYQDVAEEYNQLKDLKR.

This sequence belongs to the ELL/occludin family. In terms of assembly, interacts with TJP1 and TJP3. Phosphorylated. Localized at tight junctions of both epithelial and endothelial cells. Highly expressed in lung and liver. Expressed at a lower level in brain.

It localises to the cell membrane. The protein resides in the cell junction. Its subcellular location is the tight junction. May play a role in the formation and regulation of the tight junction (TJ) paracellular permeability barrier. Interacts with ZO-1. The protein is Occludin (OCLN) of Gallus gallus (Chicken).